Here is a 335-residue protein sequence, read N- to C-terminus: Thioredoxin-related transmembrane protein 4 (335 aa).

An N-terminal signal peptide occupies residues 1–20 (MTGGFCVPVLLAAWLAAAAA). The Thioredoxin domain maps to 26–133 (AALPAEESRV…YEDLQNYILE (108 aa)). Active-site nucleophile residues include Cys-60 and Cys-63. Cys-60 and Cys-63 are joined by a disulfide. A helical membrane pass occupies residues 186–206 (VFFVIATLVFGLFMGLILVVI). The segment at 222-316 (CEQEQSTGEA…EDGAHPADTQ (95 aa)) is disordered. A compositionally biased stretch (acidic residues) spans 238 to 280 (QDAEEEKDDSNEEENKDSLVDDEEEKEDIGDEDEGEEDEEEDN). A phosphoserine mark is found at Ser-247 and Ser-255. The segment covering 286 to 298 (AEERSDTNERAVV) has biased composition (basic and acidic residues).

The protein localises to the nucleus inner membrane. It localises to the endoplasmic reticulum membrane. In Mus musculus (Mouse), this protein is Thioredoxin-related transmembrane protein 4 (Tmx4).